Reading from the N-terminus, the 692-residue chain is A-kinase anchor protein 8 (692 aa).

Residues 1 to 195 (MDQGYGGYGA…FMRGRGQGRF (195 aa)) form an interaction with MCM2 region. An interaction with DPY30 region spans residues 1–210 (MDQGYGGYGA…PGTFMRSDPF (210 aa)). Arg109 carries the post-translational modification Asymmetric dimethylarginine; alternate. Omega-N-methylarginine; alternate is present on Arg109. An interaction with DDX5 region spans residues 109 to 201 (RGGSGGGGEG…QGRFQDRSNP (93 aa)). Position 112 is a phosphoserine (Ser112). Disordered regions lie at residues 168–203 (GQYS…NPGT), 231–254 (GGRG…SMAP), and 269–382 (STMP…RTRD). Residues 172 to 182 (ECRDPARERGS) are compositionally biased toward basic and acidic residues. Ser199 bears the Phosphoserine mark. Residues Arg233 and Arg277 each carry the omega-N-methylarginine modification. Basic and acidic residues-rich tracts occupy residues 281–297 (RMRD…DRFG) and 314–323 (PDTKLARVDS). Residues 289–306 (KRRGFDRFGPDGTGRKRK) carry the Bipartite nuclear localization signal motif. A Glycyl lysine isopeptide (Lys-Gly) (interchain with G-Cter in SUMO2) cross-link involves residue Lys317. Phosphoserine occurs at positions 323, 328, and 339. The span at 324-334 (EGDFSENDDAA) shows a compositional bias: acidic residues. The interval 387–450 (RIQFACSVCK…NKKIEKRRQE (64 aa)) is involved in chromatin-binding. C2H2 AKAP95-type zinc fingers lie at residues 392–414 (CSVC…SKFH) and 481–504 (CLAC…SVDH). The interval 525–569 (SVLNNRHIVKMLEKYLKGEDPFTSETVDPEMEGDDNLGGEDKKET) is involved in condensin complex recruitment. A disordered region spans residues 545 to 571 (PFTSETVDPEMEGDDNLGGEDKKETPE). Positions 551 to 562 (VDPEMEGDDNLG) are enriched in acidic residues. Lys567 participates in a covalent cross-link: Glycyl lysine isopeptide (Lys-Gly) (interchain with G-Cter in SUMO2). The tract at residues 572–589 (EVAADVLAEVITAAVRAV) is RII-binding. A required for interaction with MYCBP region spans residues 576-593 (DVLAEVITAAVRAVDGEG). The tract at residues 592–692 (EGAPAPESSG…AESKDAVPTE (101 aa)) is disordered. Basic and acidic residues predominate over residues 634–646 (AHEKGVPKARSEA). The residue at position 662 (Ser662) is a Phosphoserine. Over residues 663-675 (AQTRVAPAPAAAD) the composition is skewed to low complexity. Residues 683 to 692 (AESKDAVPTE) are compositionally biased toward basic and acidic residues. Ser685 is subject to Phosphoserine.

Belongs to the AKAP95 family. Binds to the PKA RII-alpha regulatory subunit PRKAR2A (phosphorylated at 'Thr-54') during mitosis. Interacts (via C-terminus) with FIGN. Interacts with NCAPD2, CCND1, MCM2, RPS6KA1, PDE4A. Interacts with CCND3, CCNE1, DDX5, CASP3. Interacts with NFKB1; detetcted in the cytoplasm. Interacts with MYCBP; MYCBP is translocated to the nucleus and the interaction prevents the association of the PKA catalytic subunit leading to suppression of PKA activity. Interacts with DPY30; mediating AKAP8 association with at least the MLL4/WBP7 HMT complex. Interacts with HDAC3; increased during mitosis. Interacts with GJA1; in the nucleus and in the nuclear membrane; the nuclear association increases with progress of cell cycle G1, S and G2 phase and decreases in M phase. Post-translationally, phosphorylated on tyrosine residues probably by SRC subfamily protein kinases; multiple phosphorylation is leading to dissociation from nuclear structures implicated in chromatin structural changes. As to expression, highly expressed in heart, liver, skeletal muscle, kidney and pancreas. Expressed in mature dendritic cells.

The protein resides in the nucleus. It localises to the nucleus matrix. Its subcellular location is the nucleolus. It is found in the cytoplasm. In terms of biological role, anchoring protein that mediates the subcellular compartmentation of cAMP-dependent protein kinase (PKA type II). Acts as an anchor for a PKA-signaling complex onto mitotic chromosomes, which is required for maintenance of chromosomes in a condensed form throughout mitosis. Recruits condensin complex subunit NCAPD2 to chromosomes required for chromatin condensation; the function appears to be independent from PKA-anchoring. May help to deliver cyclin D/E to CDK4 to facilitate cell cycle progression. Required for cell cycle G2/M transition and histone deacetylation during mitosis. In mitotic cells recruits HDAC3 to the vicinity of chromatin leading to deacetylation and subsequent phosphorylation at 'Ser-10' of histone H3; in this function may act redundantly with AKAP8L. Involved in nuclear retention of RPS6KA1 upon ERK activation thus inducing cell proliferation. May be involved in regulation of DNA replication by acting as scaffold for MCM2. Enhances HMT activity of the KMT2 family MLL4/WBP7 complex and is involved in transcriptional regulation. In a teratocarcinoma cell line is involved in retinoic acid-mediated induction of developmental genes implicating H3 'Lys-4' methylation. May be involved in recruitment of active CASP3 to the nucleus in apoptotic cells. May act as a carrier protein of GJA1 for its transport to the nucleus. May play a repressive role in the regulation of rDNA transcription. Preferentially binds GC-rich DNA in vitro. In cells, associates with ribosomal RNA (rRNA) chromatin, preferentially with rRNA promoter and transcribed regions. Involved in modulation of Toll-like receptor signaling. Required for the cAMP-dependent suppression of TNF-alpha in early stages of LPS-induced macrophage activation; the function probably implicates targeting of PKA to NFKB1. This chain is A-kinase anchor protein 8 (AKAP8), found in Homo sapiens (Human).